The sequence spans 376 residues: Flagellin B (376 aa).

Residues 103-130 are a coiled coil; it reads SNSSSERQAIQEEVSALNDELNRIAETT.

It belongs to the bacterial flagellin family. Heteromer of multiple flagellin subunits including FlaA, FlaB, FlaC, FlaD and possibly FlaE.

The protein resides in the secreted. Its subcellular location is the bacterial flagellum. Flagellin is the subunit protein which polymerizes to form the filaments of bacterial flagella. FlaB is not essential for flagellar synthesis and motility. This chain is Flagellin B (flaB), found in Vibrio anguillarum (Listonella anguillarum).